We begin with the raw amino-acid sequence, 180 residues long: MAETAETINTTISSPPPESESSTTISAMTDPTSQEAASKDTDLTKEAESEKKPGGISLRIWPPTQKTRDAVLNRLIETLSTESILSKRYGTLKSDDATTVAKLIEEEAYGVASNAVSSDDDGIKILELYSKEISKRMLESVKARSNASVGNGSVEDANTDASEVSKDDAGPASEEEKSEA.

Residues 1-26 show a composition bias toward low complexity; the sequence is MAETAETINTTISSPPPESESSTTIS. 2 disordered regions span residues 1 to 61 and 140 to 180; these read MAET…LRIW and SVKA…KSEA. The segment covering 27–36 has biased composition (polar residues); the sequence is AMTDPTSQEA. Residues 37–53 show a composition bias toward basic and acidic residues; it reads ASKDTDLTKEAESEKKP. The tract at residues 44 to 147 is WPP; the sequence is TKEAESEKKP…LESVKARSNA (104 aa). Ser173 is subject to Phosphoserine.

As to quaternary structure, binds to FPP proteins. Interacts with WAP, WIP1, WIP2 and WIP3 through its WPP domain. Interacts with WIT1 and HSP70-1. In terms of tissue distribution, expressed in roots, stems, leaves and flowers.

Its subcellular location is the nucleus envelope. The protein localises to the cytoplasm. It is found in the nucleus. The protein resides in the golgi apparatus. Its function is as follows. Regulates the mitotic activity in roots. Plays a role with HSP70-1 in facilitating WIT1 nuclear envelope targeting. This chain is WPP domain-containing protein 2 (WPP2), found in Arabidopsis thaliana (Mouse-ear cress).